The chain runs to 85 residues: uncharacterized protein (85 aa).

2 disordered regions span residues 1–28 (MPQK…LRKA) and 35–54 (SKKK…SLTE). The span at 35–48 (SKKKSLQHLKKLKK) shows a compositional bias: basic residues.

It is found in the nucleus. This is an uncharacterized protein from Saccharomyces cerevisiae (strain ATCC 204508 / S288c) (Baker's yeast).